Consider the following 107-residue polypeptide: Iron-sulfur cluster assembly protein CyaY (107 aa).

It belongs to the frataxin family.

Functionally, involved in iron-sulfur (Fe-S) cluster assembly. May act as a regulator of Fe-S biogenesis. In Yersinia pseudotuberculosis serotype O:1b (strain IP 31758), this protein is Iron-sulfur cluster assembly protein CyaY.